Consider the following 622-residue polypeptide: Kinesin light chain 2 (622 aa).

Positions 78-143 form a coiled coil; sequence ILALSSHLGA…KQHLLFMSQI (66 aa). A compositionally biased stretch (basic and acidic residues) spans 145 to 164; it reads KLDEDASPNEEKGDVPKDTL. The interval 145 to 191 is disordered; sequence KLDEDASPNEEKGDVPKDTLDDLFPNEDEQSPAPSPGGGDVSGQHGG. A phosphoserine mark is found at Ser-151, Ser-175, and Ser-179. Residues 180 to 190 show a composition bias toward gly residues; sequence PGGGDVSGQHG. 5 TPR repeats span residues 198 to 231, 240 to 273, 282 to 315, 324 to 357, and 366 to 399; these read LRTL…LEKT, ATML…REKT, AATL…REKV, AKQL…YATR, and AKTK…AHEK. Ser-445 is modified (phosphoserine). The TPR 6 repeat unit spans residues 449-482; that stretch reads NTTLRSLGALYRRQGKLEAAHTLEDCASRNRKQG. Disordered regions lie at residues 476–548 and 563–622; these read SRNR…SFGK and KLQG…SLVG. A compositionally biased stretch (basic and acidic residues) spans 493–509; the sequence is ELLKDGSGRRGDRRSSR. Phosphoserine is present on residues Ser-508 and Ser-521. The segment covering 538–547 has biased composition (low complexity); it reads GSLRRSGSFG. Residues Ser-581, Ser-582, Ser-589, Ser-608, Ser-610, and Ser-615 each carry the phosphoserine modification. Positions 601 to 622 are enriched in low complexity; that stretch reads LSDSRTLSSSSMDLSRRSSLVG.

It belongs to the kinesin light chain family. As to quaternary structure, oligomeric complex composed of two heavy chains and two light chains. Interacts (via TPR repeats) with PLEKHM2.

The protein resides in the cytoplasm. It localises to the cytoskeleton. The protein localises to the lysosome membrane. Kinesin is a microtubule-associated force-producing protein that plays a role in organelle transport. The light chain functions in coupling of cargo to the heavy chain or in the modulation of its ATPase activity. Through binding with PLEKHM2 and ARL8B, recruits kinesin-1 to lysosomes and hence direct lysosomes movement toward microtubule plus ends. This is Kinesin light chain 2 from Homo sapiens (Human).